A 203-amino-acid chain; its full sequence is MPELTTAPGLLALVGLAAYLLGAIPFGLLIAKLFGLGNLREIGSGNIGATNVLRTGSKPAAAATLILDAGKGAFAVILARVLVGEDAAQIAGAAAFLGHCFPVYLKFNGGKGVATFFGTVIALSWPLGLAAGAIWLATAYTFRISSLSALMAALMTPIFAWGFGQRELVVLSLFLGFLIWIRHRENIIRLLSGTEPRIGAKKR.

5 consecutive transmembrane segments (helical) span residues 10-30 (LLAL…GLLI), 59-79 (PAAA…VILA), 87-107 (AAQI…YLKF), 116-136 (FFGT…AIWL), and 168-188 (LVVL…ENII).

The protein belongs to the PlsY family. As to quaternary structure, probably interacts with PlsX.

The protein resides in the cell inner membrane. It catalyses the reaction an acyl phosphate + sn-glycerol 3-phosphate = a 1-acyl-sn-glycero-3-phosphate + phosphate. It participates in lipid metabolism; phospholipid metabolism. In terms of biological role, catalyzes the transfer of an acyl group from acyl-phosphate (acyl-PO(4)) to glycerol-3-phosphate (G3P) to form lysophosphatidic acid (LPA). This enzyme utilizes acyl-phosphate as fatty acyl donor, but not acyl-CoA or acyl-ACP. In Dinoroseobacter shibae (strain DSM 16493 / NCIMB 14021 / DFL 12), this protein is Glycerol-3-phosphate acyltransferase.